Consider the following 750-residue polypeptide: Polyribonucleotide nucleotidyltransferase (750 aa).

Residues aspartate 523 and aspartate 529 each contribute to the Mg(2+) site. The region spanning 589 to 648 (PRVTSISIPVDKIGEVIGPKGKMINSITEETGAEITIEDDGTIYVGAADGPSAEAAIDKI) is the KH domain. The 70-residue stretch at 660-729 (GERFLGTVVK…SRGKISLVVV (70 aa)) folds into the S1 motif domain.

It belongs to the polyribonucleotide nucleotidyltransferase family. Mg(2+) is required as a cofactor.

Its subcellular location is the cytoplasm. It carries out the reaction RNA(n+1) + phosphate = RNA(n) + a ribonucleoside 5'-diphosphate. Functionally, involved in mRNA degradation. Catalyzes the phosphorolysis of single-stranded polyribonucleotides processively in the 3'- to 5'-direction. The polypeptide is Polyribonucleotide nucleotidyltransferase (Saccharopolyspora erythraea (strain ATCC 11635 / DSM 40517 / JCM 4748 / NBRC 13426 / NCIMB 8594 / NRRL 2338)).